The primary structure comprises 86 residues: Small ribosomal subunit protein uS15c (86 aa).

It belongs to the universal ribosomal protein uS15 family. Part of the 30S ribosomal subunit.

The protein resides in the plastid. It localises to the chloroplast. This Cryptomeria japonica (Japanese cedar) protein is Small ribosomal subunit protein uS15c (rps15).